Consider the following 342-residue polypeptide: tRNA N6-adenosine threonylcarbamoyltransferase (342 aa).

2 residues coordinate Fe cation: His111 and His115. Substrate-binding positions include 134 to 138 (LVSGG), Asp167, Gly180, and Asn277. Residue Asp305 coordinates Fe cation.

It belongs to the KAE1 / TsaD family. Fe(2+) serves as cofactor.

Its subcellular location is the cytoplasm. It catalyses the reaction L-threonylcarbamoyladenylate + adenosine(37) in tRNA = N(6)-L-threonylcarbamoyladenosine(37) in tRNA + AMP + H(+). Its function is as follows. Required for the formation of a threonylcarbamoyl group on adenosine at position 37 (t(6)A37) in tRNAs that read codons beginning with adenine. Is involved in the transfer of the threonylcarbamoyl moiety of threonylcarbamoyl-AMP (TC-AMP) to the N6 group of A37, together with TsaE and TsaB. TsaD likely plays a direct catalytic role in this reaction. In Cellvibrio japonicus (strain Ueda107) (Pseudomonas fluorescens subsp. cellulosa), this protein is tRNA N6-adenosine threonylcarbamoyltransferase.